A 375-amino-acid chain; its full sequence is tRNA-specific 2-thiouridylase MnmA (375 aa).

ATP contacts are provided by residues 13-20 (AMSGGVDS) and Met-39. Cys-111 serves as the catalytic Nucleophile. A disulfide bond links Cys-111 and Cys-208. Gly-135 lines the ATP pocket. Positions 158-160 (KDQ) are interaction with tRNA. Residue Cys-208 is the Cysteine persulfide intermediate of the active site. The segment at 313–314 (RY) is interaction with tRNA.

This sequence belongs to the MnmA/TRMU family.

The protein resides in the cytoplasm. It catalyses the reaction S-sulfanyl-L-cysteinyl-[protein] + uridine(34) in tRNA + AH2 + ATP = 2-thiouridine(34) in tRNA + L-cysteinyl-[protein] + A + AMP + diphosphate + H(+). Catalyzes the 2-thiolation of uridine at the wobble position (U34) of tRNA, leading to the formation of s(2)U34. This is tRNA-specific 2-thiouridylase MnmA from Geotalea uraniireducens (strain Rf4) (Geobacter uraniireducens).